The chain runs to 744 residues: NAD(P)H-quinone oxidoreductase subunit 5, chloroplastic (744 aa).

Transmembrane regions (helical) follow at residues 9-29 (WIIPFLPLPVPMLIGLGLFLF), 40-60 (WAFQSVLLLSIVMIFSMNLSI), 89-109 (IDPLTSIMSILITTVGILVLI), 125-145 (FVYMSFFSTSMLGLVTSSNLI), 147-167 (IYIFWELVGICSYLLIGFWFT), 185-205 (GDFGLLLGILGFYWITGSFEF), 219-239 (NEVNFLFVTLCAVLLFAGAIA), 258-278 (TPISALIHAATMVAAGIFLVA), 290-312 (IMNFISLIGIITVFLGATLALAQ), 327-347 (LGYMMLALGMGSYRSALFHLI), 354-374 (ALLFLGSGSVIHSMETLVGYC), 396-416 (TSFLLGTLSLCGIPPLACFWS), 425-445 (WLYSPIFAIIAWSTAGLTAFY), 549-569 (LFPILILVLFTLFVGFLGIPF), 608-628 (VFSVSISSFGIFIAFFLYKPV), and 724-744 (YLFFYFSYVSIFLLIYYFLNF).

It belongs to the complex I subunit 5 family. NDH is composed of at least 16 different subunits, 5 of which are encoded in the nucleus.

The protein resides in the plastid. The protein localises to the chloroplast thylakoid membrane. The enzyme catalyses a plastoquinone + NADH + (n+1) H(+)(in) = a plastoquinol + NAD(+) + n H(+)(out). The catalysed reaction is a plastoquinone + NADPH + (n+1) H(+)(in) = a plastoquinol + NADP(+) + n H(+)(out). In terms of biological role, NDH shuttles electrons from NAD(P)H:plastoquinone, via FMN and iron-sulfur (Fe-S) centers, to quinones in the photosynthetic chain and possibly in a chloroplast respiratory chain. The immediate electron acceptor for the enzyme in this species is believed to be plastoquinone. Couples the redox reaction to proton translocation, and thus conserves the redox energy in a proton gradient. The chain is NAD(P)H-quinone oxidoreductase subunit 5, chloroplastic (ndhF) from Mutisia acuminata.